The chain runs to 565 residues: DNA mismatch repair protein MutL (565 aa).

This sequence belongs to the DNA mismatch repair MutL/HexB family.

In terms of biological role, this protein is involved in the repair of mismatches in DNA. It is required for dam-dependent methyl-directed DNA mismatch repair. May act as a 'molecular matchmaker', a protein that promotes the formation of a stable complex between two or more DNA-binding proteins in an ATP-dependent manner without itself being part of a final effector complex. This chain is DNA mismatch repair protein MutL, found in Desulforudis audaxviator (strain MP104C).